The chain runs to 75 residues: Small integral membrane protein 7-A (75 aa).

The signal sequence occupies residues 1–17 (MIGDLLLFGTLLVNAGA). At 18 to 53 (VLNFKLKKKESQGFGDDLTEATTGDNIREFLLSLRY) the chain is on the extracellular side. Residues 54–74 (FRIFIALWNIFMMFCMIVLFG) form a helical membrane-spanning segment. A topological domain (cytoplasmic) is located at residue Ser-75.

This sequence belongs to the SMIM7 family.

Its subcellular location is the membrane. The protein is Small integral membrane protein 7-A (smim7-a) of Xenopus laevis (African clawed frog).